A 158-amino-acid polypeptide reads, in one-letter code: uncharacterized protein (158 aa).

This is an uncharacterized protein from Saccharolobus islandicus (Sulfolobus islandicus).